The chain runs to 935 residues: GPI ethanolamine phosphate transferase 1 (935 aa).

Topologically, residues 1–5 are cytoplasmic; that stretch reads MFGRL. Residues 6–26 form a helical membrane-spanning segment; sequence LLLGILFHVVFLKSIFDIYFV. Residues 27 to 449 lie on the Lumenal side of the membrane; sequence TPLIHGMKQY…LQRYDWLLLR (423 aa). N-linked (GlcNAc...) asparagine glycosylation is found at Asn86, Asn134, Asn315, and Asn398. The helical transmembrane segment at 450–470 threads the bilayer; sequence SIVFFGYLSWIGYVICFVFSL. Residues 471 to 483 are Cytoplasmic-facing; sequence NIEPSSKIVKPVS. The chain crosses the membrane as a helical span at residues 484-503; sequence VVKRVAFNIPFLLICIFFYI. Over 504–509 the chain is Lumenal; the sequence is QSSPPF. Residues 510-530 form a helical membrane-spanning segment; that stretch reads YYGYALFPTIFLQLIHSIFPN. Topologically, residues 531-547 are cytoplasmic; that stretch reads TKLGFKNFLTVAKQKHG. The chain crosses the membrane as a helical span at residues 548–568; the sequence is FSLLKILFISLCILCLLQFIV. Residues 569 to 576 are Lumenal-facing; it reads YSYFHREG. A helical membrane pass occupies residues 577-597; that stretch reads FSVILMGLAAWPWLLHADYAF. Residues 598–600 lie on the Cytoplasmic side of the membrane; sequence SHK. The chain crosses the membrane as a helical span at residues 601 to 621; that stretch reads TISVSWSVLTSLLCFFTILPV. Over 622–626 the chain is Lumenal; that stretch reads NKKES. Residues 627-647 traverse the membrane as a helical segment; it reads LLFIFAGGFAMSVAGVFYILY. The Cytoplasmic segment spans residues 648–663; sequence RRNQAFQYSSTVTNKQ. A helical transmembrane segment spans residues 664–684; it reads LVLQVLIIMATVPVTLKIADS. Topologically, residues 685–688 are lumenal; that stretch reads LQRN. Residues 689 to 709 form a helical membrane-spanning segment; that stretch reads IAIPPILRLVAFGLFITSYII. Residues 710-737 are Cytoplasmic-facing; sequence PSHHIRSCKHYFLDRLAILFLTFSPTMC. Residues 738–758 form a helical membrane-spanning segment; it reads MLSISFEALFYVVLFITLGLW. Residues 759-792 are Lumenal-facing; it reads MELETELQKYTEQLHPEYSRKKDAKFHLSLSHIR. The helical transmembrane segment at 793-813 threads the bilayer; it reads ISLFFYIFINVAFFGTGNVAS. Residues 814–835 are Cytoplasmic-facing; it reads LSTFALDSVKRFIPVFNPVTQG. Residues 836–856 form a helical membrane-spanning segment; sequence ALLMYTILVPFIALSAAFGIM. Residues 857–865 are Lumenal-facing; that stretch reads NKRLGGIQQ. The helical transmembrane segment at 866 to 886 threads the bilayer; sequence VTFFLAVGMADIVTINFFYLV. The Cytoplasmic portion of the chain corresponds to 887–894; that stretch reads KDEGSWKD. A helical transmembrane segment spans residues 895-915; it reads IGVSISHFCISNFLILFITAL. Residues 916-935 are Lumenal-facing; the sequence is EHASAILCKNITYTIHEKVN. A glycan (N-linked (GlcNAc...) asparagine) is linked at Asn925.

The protein belongs to the PIGG/PIGN/PIGO family. PIGN subfamily.

Its subcellular location is the endoplasmic reticulum membrane. It participates in glycolipid biosynthesis; glycosylphosphatidylinositol-anchor biosynthesis. Its function is as follows. Ethanolamine phosphate transferase involved in glycosylphosphatidylinositol-anchor biosynthesis. Transfers ethanolamine phosphate to the first alpha-1,4-linked mannose of the glycosylphosphatidylinositol precursor of GPI-anchor. This Schizosaccharomyces pombe (strain 972 / ATCC 24843) (Fission yeast) protein is GPI ethanolamine phosphate transferase 1 (its8).